Here is a 368-residue protein sequence, read N- to C-terminus: HECT-type ubiquitin ligase-interacting protein apyA (368 aa).

The protein belongs to the arrestin family. As to quaternary structure, interacts with hulA.

In terms of biological role, may be involved in signaling by recognizing appropriately phosphorylated substrates via its arrestin domains and then recruit a HECT-type ubiquitin ligase such as hulA, leading to ubiquitination of the substrate, providing a link between ubiquitination and phosphorylation in protein regulation and stability. This is HECT-type ubiquitin ligase-interacting protein apyA (apyA) from Emericella nidulans (strain FGSC A4 / ATCC 38163 / CBS 112.46 / NRRL 194 / M139) (Aspergillus nidulans).